Reading from the N-terminus, the 456-residue chain is tRNA modification GTPase MnmE (456 aa).

3 residues coordinate (6S)-5-formyl-5,6,7,8-tetrahydrofolate: Arg-25, Glu-82, and Lys-121. The TrmE-type G domain maps to 217-379 (GMKVVIAGRP…LKAHLKSVMG (163 aa)). Asn-227 is a binding site for K(+). GTP is bound by residues 227 to 232 (NAGKSS), 246 to 252 (TNIAGTT), and 271 to 274 (DTAG). Ser-231 is a Mg(2+) binding site. The K(+) site is built by Thr-246, Ile-248, and Thr-251. Thr-252 serves as a coordination point for Mg(2+). A (6S)-5-formyl-5,6,7,8-tetrahydrofolate-binding site is contributed by Lys-456.

The protein belongs to the TRAFAC class TrmE-Era-EngA-EngB-Septin-like GTPase superfamily. TrmE GTPase family. As to quaternary structure, homodimer. Heterotetramer of two MnmE and two MnmG subunits. It depends on K(+) as a cofactor.

The protein resides in the cytoplasm. Exhibits a very high intrinsic GTPase hydrolysis rate. Involved in the addition of a carboxymethylaminomethyl (cmnm) group at the wobble position (U34) of certain tRNAs, forming tRNA-cmnm(5)s(2)U34. In Saccharophagus degradans (strain 2-40 / ATCC 43961 / DSM 17024), this protein is tRNA modification GTPase MnmE.